We begin with the raw amino-acid sequence, 159 residues long: Transcriptional repressor NrdR (159 aa).

A zinc finger spans residues 3-34 (CPFCEYNGTRVLDSRPFNHNKSIRRRRECEAC). The ATP-cone domain occupies 49–139 (LLIVKKDGTR…VYRQFKDINV (91 aa)).

The protein belongs to the NrdR family. The cofactor is Zn(2+).

In terms of biological role, negatively regulates transcription of bacterial ribonucleotide reductase nrd genes and operons by binding to NrdR-boxes. The polypeptide is Transcriptional repressor NrdR (Brevibacillus brevis (strain 47 / JCM 6285 / NBRC 100599)).